A 317-amino-acid chain; its full sequence is MHVPVLLEEAADALNIRADGIYVDATFGRGGHSRLILSRLGESGRLIAFDKDPAAISAARSIRDERFQAVHGSYAQIRTALESLSVSRIDGILLDLGVSSIQLDEASRGFSFRHDGPLDMRMDSSRGKTAAEWLATVTETELKEVIRTYGEERYAGQIAGAIVMAQTRQPIVTTFQLAEIVAAVVRKFGHRDGRQHPATRTFQAIRIHLNQELEELSVTLPQCVELLNANGRLVVISFHSLEDRIVKRFMRMQAGTDTLPRKLPVRDEESRMHSRQTLQIIGKKIRPGENEVAANPRARSAVMRVAEKLETGSKVDR.

S-adenosyl-L-methionine contacts are provided by residues G30–H32, D50, Y74, D95, and Q102.

This sequence belongs to the methyltransferase superfamily. RsmH family.

The protein resides in the cytoplasm. The enzyme catalyses cytidine(1402) in 16S rRNA + S-adenosyl-L-methionine = N(4)-methylcytidine(1402) in 16S rRNA + S-adenosyl-L-homocysteine + H(+). Functionally, specifically methylates the N4 position of cytidine in position 1402 (C1402) of 16S rRNA. The chain is Ribosomal RNA small subunit methyltransferase H from Nitrosomonas europaea (strain ATCC 19718 / CIP 103999 / KCTC 2705 / NBRC 14298).